Reading from the N-terminus, the 165-residue chain is Putative inactive neutral ceramidase B (165 aa).

It belongs to the neutral ceramidase family. In terms of tissue distribution, ubiquitous. Expression is reduced with increasing age and in late-onset Alzheimer disease (LOAD) patients. This reduction is even more pronounced in patients with an affected mother.

This is Putative inactive neutral ceramidase B from Homo sapiens (Human).